A 194-amino-acid polypeptide reads, in one-letter code: Large ribosomal subunit protein bL25 (194 aa).

The protein belongs to the bacterial ribosomal protein bL25 family. CTC subfamily. Part of the 50S ribosomal subunit; part of the 5S rRNA/L5/L18/L25 subcomplex. Contacts the 5S rRNA. Binds to the 5S rRNA independently of L5 and L18.

In terms of biological role, this is one of the proteins that binds to the 5S RNA in the ribosome where it forms part of the central protuberance. This Thermobifida fusca (strain YX) protein is Large ribosomal subunit protein bL25.